The primary structure comprises 149 residues: Protein-export protein SecB (149 aa).

This sequence belongs to the SecB family. Homotetramer, a dimer of dimers. One homotetramer interacts with 1 SecA dimer.

It is found in the cytoplasm. One of the proteins required for the normal export of preproteins out of the cell cytoplasm. It is a molecular chaperone that binds to a subset of precursor proteins, maintaining them in a translocation-competent state. It also specifically binds to its receptor SecA. The chain is Protein-export protein SecB from Hydrogenovibrio crunogenus (strain DSM 25203 / XCL-2) (Thiomicrospira crunogena).